The chain runs to 228 residues: Ribosomal RNA small subunit methyltransferase G (228 aa).

Residues Gly-89, Leu-94, Val-140 to Glu-141, and Arg-159 contribute to the S-adenosyl-L-methionine site.

It belongs to the methyltransferase superfamily. RNA methyltransferase RsmG family.

The protein localises to the cytoplasm. It catalyses the reaction guanosine(527) in 16S rRNA + S-adenosyl-L-methionine = N(7)-methylguanosine(527) in 16S rRNA + S-adenosyl-L-homocysteine. In terms of biological role, specifically methylates the N7 position of guanine in position 527 of 16S rRNA. This chain is Ribosomal RNA small subunit methyltransferase G, found in Burkholderia multivorans (strain ATCC 17616 / 249).